The following is a 396-amino-acid chain: Lipopolysaccharide assembly protein B (396 aa).

A helical transmembrane segment spans residues 1-20; it reads MIELLFLLLPIAAAYGWYMG. At 21–396 the chain is on the cytoplasmic side; it reads RRSAKKDQDD…IKPVSNQEHN (376 aa). TPR repeat units lie at residues 35-68, 77-109, 149-182, and 221-254; these read LSRDYVTGVNFLLSNQTDKAVDLFLDMLQKQEIE, FEAELTLGNLFRSRGEVDRALRIHQALDLSPNY, ENALQQLLVIYQKTKEWKKAVNIAEKLAKIKPQE, and VRASLLLANLAMLDGQYQQAVKILENVLEQNPDY. Fe cation is bound by residues Cys-364, Cys-367, Cys-378, and Cys-381.

The protein belongs to the LapB family.

The protein localises to the cell inner membrane. Modulates cellular lipopolysaccharide (LPS) levels by regulating LpxC, which is involved in lipid A biosynthesis. May act by modulating the proteolytic activity of FtsH towards LpxC. May also coordinate assembly of proteins involved in LPS synthesis at the plasma membrane. This Haemophilus influenzae (strain ATCC 51907 / DSM 11121 / KW20 / Rd) protein is Lipopolysaccharide assembly protein B.